The primary structure comprises 610 residues: tRNA uridine 5-carboxymethylaminomethyl modification enzyme MnmG (610 aa).

Position 14 to 19 (14 to 19) interacts with FAD; sequence GAGHAG. 274–288 serves as a coordination point for NAD(+); sequence GPRYCPSIEDKIVKF.

It belongs to the MnmG family. Homodimer. Heterotetramer of two MnmE and two MnmG subunits. Requires FAD as cofactor.

Its subcellular location is the cytoplasm. In terms of biological role, NAD-binding protein involved in the addition of a carboxymethylaminomethyl (cmnm) group at the wobble position (U34) of certain tRNAs, forming tRNA-cmnm(5)s(2)U34. This is tRNA uridine 5-carboxymethylaminomethyl modification enzyme MnmG from Chlamydia trachomatis serovar L2b (strain UCH-1/proctitis).